Consider the following 742-residue polypeptide: MSLLLEPSAAMIKEQKLYREMGLTDEEFARIEAILGRLPNYTETGIFAVMWSEHCSYKNSKPVLKKFPTDGPHVLQGPGEGAGIVDIGDGLAVAFKIESHNHPSAIEPYQGAATGVGGIIRDVFSMGARPIALLNSLRFGELTSPRVKYLFEQVVAGIAGYGNCVGIPTVGGEVQFDPAYEGNPLVNAMCVGIIRHEDIQRGVATGVGNTVMYVGAKTGRDGIHGATFASEELSEQSEAKRPAVQVGDPFMEKLLLEACLEAVKSDALVGIQDMGAAGLTSSSAEMASKGGFGIEMNLDLVPQREAGMTPYEMMLSESQERMLLVVKQGCEDEIAAIFAKYGLEAKAIGKVTDDKMLRLLFRGEVAAEIPVDALAKDAPVYHKPSAEPAYYREFQAMPPYTPHIEDYNQTLLGLLAQPTIASKEWVYDQYDYMVRTNTVVAPGSDAAVVRIRGMNKALALTTDCNSRYLYLDPETGGKIAVAEAARNVICSGAKPLAITDCLNFGSPEKPEIFWQLEKAVDGMSEACRALGTPVVSGNVSLYNETNGEAVYPTPVVGMVGLIDDLSHITTQSFKQAGDLIYVIGEAKPEFGGSELQKWLEGRIFGKAPEIDLEVEASRQRQLLAAIRAGVVASAHDIAEGGLAVALAECVMGASGLGAKVTIGGDLVSELFSETQSRFVISVKKEHQEAFEQLVEAKRIGEVTGDGILTVNGEQGETVIRLSVDEMRNVWKGAIPCLLKSKD.

Residue histidine 54 is part of the active site. ATP contacts are provided by tyrosine 57 and lysine 96. Residue glutamate 98 participates in Mg(2+) binding. Residues 99 to 102 (SHNH) and arginine 121 each bind substrate. Histidine 100 (proton acceptor) is an active-site residue. Residue aspartate 122 participates in Mg(2+) binding. Residue glutamine 245 participates in substrate binding. Aspartate 273 lines the Mg(2+) pocket. Residue 317-319 (ESQ) participates in substrate binding. ATP is bound by residues aspartate 500 and glycine 537. Asparagine 538 lines the Mg(2+) pocket. Residue serine 540 coordinates substrate.

This sequence belongs to the FGAMS family. As to quaternary structure, monomer. Part of the FGAM synthase complex composed of 1 PurL, 1 PurQ and 2 PurS subunits.

The protein resides in the cytoplasm. It carries out the reaction N(2)-formyl-N(1)-(5-phospho-beta-D-ribosyl)glycinamide + L-glutamine + ATP + H2O = 2-formamido-N(1)-(5-O-phospho-beta-D-ribosyl)acetamidine + L-glutamate + ADP + phosphate + H(+). The protein operates within purine metabolism; IMP biosynthesis via de novo pathway; 5-amino-1-(5-phospho-D-ribosyl)imidazole from N(2)-formyl-N(1)-(5-phospho-D-ribosyl)glycinamide: step 1/2. Part of the phosphoribosylformylglycinamidine synthase complex involved in the purines biosynthetic pathway. Catalyzes the ATP-dependent conversion of formylglycinamide ribonucleotide (FGAR) and glutamine to yield formylglycinamidine ribonucleotide (FGAM) and glutamate. The FGAM synthase complex is composed of three subunits. PurQ produces an ammonia molecule by converting glutamine to glutamate. PurL transfers the ammonia molecule to FGAR to form FGAM in an ATP-dependent manner. PurS interacts with PurQ and PurL and is thought to assist in the transfer of the ammonia molecule from PurQ to PurL. The sequence is that of Phosphoribosylformylglycinamidine synthase subunit PurL from Geobacillus kaustophilus (strain HTA426).